A 250-amino-acid polypeptide reads, in one-letter code: 2,3-bisphosphoglycerate-dependent phosphoglycerate mutase (250 aa).

Substrate contacts are provided by residues 8-15 (RHGESQWN), 21-22 (TG), Arg-60, 87-90 (ERHY), Lys-98, 114-115 (RR), and 183-184 (GN). Residue His-9 is the Tele-phosphohistidine intermediate of the active site. Glu-87 (proton donor/acceptor) is an active-site residue.

The protein belongs to the phosphoglycerate mutase family. BPG-dependent PGAM subfamily. Homodimer.

It carries out the reaction (2R)-2-phosphoglycerate = (2R)-3-phosphoglycerate. It functions in the pathway carbohydrate degradation; glycolysis; pyruvate from D-glyceraldehyde 3-phosphate: step 3/5. Functionally, catalyzes the interconversion of 2-phosphoglycerate and 3-phosphoglycerate. The sequence is that of 2,3-bisphosphoglycerate-dependent phosphoglycerate mutase from Bordetella pertussis (strain Tohama I / ATCC BAA-589 / NCTC 13251).